A 575-amino-acid chain; its full sequence is FAD-linked oxidoreductase asqF (575 aa).

The signal sequence occupies residues 1-23 (MALFRLSAAIVVIFLYIWSPSQR). Residues N45 and N80 are each glycosylated (N-linked (GlcNAc...) asparagine). The region spanning 118–306 (NQGRIPLYAA…VRVTMRTYPD (189 aa)) is the FAD-binding PCMH-type domain. H156 bears the Pros-8alpha-FAD histidine mark. N-linked (GlcNAc...) asparagine glycosylation is present at N370.

This sequence belongs to the oxygen-dependent FAD-linked oxidoreductase family. It depends on FAD as a cofactor.

The enzyme catalyses peniprequinolone + A = yaequinolone E + AH2. Its pathway is secondary metabolite biosynthesis. It participates in alkaloid biosynthesis. It functions in the pathway mycotoxin biosynthesis. In terms of biological role, FAD-linked oxidoreductase; part of the gene cluster that mediates the biosynthesis of the aspoquinolone mycotoxins. Within the pathway, asqF performs FAD-dependent dehydrogenation of the dimethylallyl quinolone peniprequinolone to yield the conjugated aryl diene yaequinolone E. The first step of the pathway is catalyzed by the nonribosomal peptide synthetase asqK that condenses anthranilic acid and O-methyl-L-tyrosine to produce 4'-methoxycyclopeptin. 4'-methoxycyclopeptin is then converted to 4'-methoxydehydrocyclopeptin by the ketoglutarate-dependent dioxygenase asqJ. AsqJ also converts its first product 4'-methoxydehydrocyclopeptin to 4'-methoxycyclopenin. The following conversion of 4'-methoxycyclopenin into 4'-methoxyviridicatin is catalyzed by the cyclopenase asqI. 4'-methoxyviridicatin is the precursor of quinolone natural products, and is further converted to quinolinone B. The prenyltransferase asqH1 then catalyzes the canonical Friedel-Crafts alkylation of quinolinone B with dimethylallyl cation to yield dimethylallyl quinolone, which is subjected to FAD-dependent dehydrogenation by the FAD-linked oxidoreductase asqF to yield conjugated aryl diene. The delta(3') double bond then serves as the site of the second alkylation with DMAPP catalyzed by the prenyltransferase asqH2 to yield a carbenium ion intermediate, which can be attacked by H(2)O to yield a styrenyl quinolone containing a C3'-hydroxyprenyl chain. The FAD-dependent monooxygenase asqG performs epoxidation of the terminal C7'-C8' olefin. Finally, after dehydratation of the epoxide at C3 by asqC, the quinolone epoxide rearrangement protein asqO catalyzes an enzymatic 3-exo-tet cyclization to yield the cyclopropyl-THF ring system in aspoquinolone. The chain is FAD-linked oxidoreductase asqF from Emericella nidulans (strain FGSC A4 / ATCC 38163 / CBS 112.46 / NRRL 194 / M139) (Aspergillus nidulans).